Consider the following 336-residue polypeptide: MKAIFNRRVVVDSSSRLTKLLANPTTHSHLNRQTFTSLYKPNQSRHFRTHYLPSSPSSPPVSRFDPSQLWRSEKIRGFFASALGNKAVKLGNLVESRVGFIGSQFPKKGFEFQRFSGFQRRGWKHWLQGLSDRDVVLGLVIANAGVFVMWRVFNQQFMMNNFMISLDNFKSGRLHTLITSAFSHIDIGHIVSNMIGLYFFGTSIARNFGPQFLLKLYLAGALGGSVFYLIHHAYMAATSPKGQGAFVRDPSRTPGLGASGAVNAIMLLDIFLHPRATLYLEFFIPVPAMLLGIFLIGKDILRITEGNSNISGSAHLGGAAVAAIAWARIRKGRFRF.

A mitochondrion-targeting transit peptide spans 1-85 (MKAIFNRRVV…RGFFASALGN (85 aa)). 6 helical membrane passes run 135 to 155 (VVLG…VFNQ), 185 to 205 (IDIG…TSIA), 216 to 236 (LYLA…AYMA), 254 to 274 (PGLG…FLHP), 276 to 296 (ATLY…IFLI), and 307 to 327 (NSNI…IAWA). The active-site Nucleophile is Ser-259. Catalysis depends on His-315, which acts as the Charge relay system.

Belongs to the peptidase S54 family.

It localises to the mitochondrion membrane. Its function is as follows. Probable rhomboid-type serine protease that catalyzes intramembrane proteolysis. Unable to cleave either of the yeast Pcp1 substrates in yeast cells. The polypeptide is RHOMBOID-like protein 12, mitochondrial (Arabidopsis thaliana (Mouse-ear cress)).